The following is a 76-amino-acid chain: UPF0291 protein BCE_1981 (76 aa).

Belongs to the UPF0291 family.

It is found in the cytoplasm. In Bacillus cereus (strain ATCC 10987 / NRS 248), this protein is UPF0291 protein BCE_1981.